We begin with the raw amino-acid sequence, 121 residues long: HTH-type transcriptional regulator Rv1152 (121 aa).

The HTH gntR-type domain occupies 15–83 (KPLFDQLRTQ…GRFGTFISRF (69 aa)). The H-T-H motif DNA-binding region spans 43–62 (VRDLAGQLGVAANTVARAYR).

It localises to the cytoplasm. It is found in the secreted. The protein resides in the cell wall. Functionally, transcriptional regulator that modulates resistance to vancomycin and aminoglycosides. Negatively regulates the expression of several genes responsive to vancomycin, resulting in decreased susceptibility of bacteria to vancomycin. Negatively regulates the expression of genes encoding the ribosome binding protein Hsp, the small subunit of sulfate adenylyltransferase CysD, the L-lysine-epsilon aminotransferase LAT and the protease HtpX. Also modulates purine metabolism and aminoglycoside antibiotic resistance. Negatively regulates the expression of purine metabolism-related genes and the accumulation of purine metabolites, which affects aminoglycoside antibiotic resistance. This chain is HTH-type transcriptional regulator Rv1152, found in Mycobacterium tuberculosis (strain ATCC 25618 / H37Rv).